A 253-amino-acid polypeptide reads, in one-letter code: Ubiquinone/menaquinone biosynthesis C-methyltransferase UbiE (253 aa).

S-adenosyl-L-methionine contacts are provided by residues Thr-76, Asp-97, and 125-126; that span reads NA.

It belongs to the class I-like SAM-binding methyltransferase superfamily. MenG/UbiE family.

It carries out the reaction a 2-demethylmenaquinol + S-adenosyl-L-methionine = a menaquinol + S-adenosyl-L-homocysteine + H(+). The enzyme catalyses a 2-methoxy-6-(all-trans-polyprenyl)benzene-1,4-diol + S-adenosyl-L-methionine = a 5-methoxy-2-methyl-3-(all-trans-polyprenyl)benzene-1,4-diol + S-adenosyl-L-homocysteine + H(+). The protein operates within quinol/quinone metabolism; menaquinone biosynthesis; menaquinol from 1,4-dihydroxy-2-naphthoate: step 2/2. It functions in the pathway cofactor biosynthesis; ubiquinone biosynthesis. Its function is as follows. Methyltransferase required for the conversion of demethylmenaquinol (DMKH2) to menaquinol (MKH2) and the conversion of 2-polyprenyl-6-methoxy-1,4-benzoquinol (DDMQH2) to 2-polyprenyl-3-methyl-6-methoxy-1,4-benzoquinol (DMQH2). This is Ubiquinone/menaquinone biosynthesis C-methyltransferase UbiE from Rhodopseudomonas palustris (strain HaA2).